A 901-amino-acid polypeptide reads, in one-letter code: Protein translocase subunit SecA (901 aa).

ATP contacts are provided by residues glutamine 89, 107–111, and aspartate 502; that span reads GEGKT. The disordered stretch occupies residues 838–883; sequence YQQQQAETEAQMHPEHEEAEGGEVSGRVAGFDETDPTTWGNPSRND. Positions 885, 887, 896, and 897 each coordinate Zn(2+).

Belongs to the SecA family. In terms of assembly, monomer and homodimer. Part of the essential Sec protein translocation apparatus which comprises SecA, SecYEG and auxiliary proteins SecDF-YajC and YidC. Zn(2+) is required as a cofactor.

The protein resides in the cell inner membrane. Its subcellular location is the cytoplasm. The enzyme catalyses ATP + H2O + cellular proteinSide 1 = ADP + phosphate + cellular proteinSide 2.. Its function is as follows. Part of the Sec protein translocase complex. Interacts with the SecYEG preprotein conducting channel. Has a central role in coupling the hydrolysis of ATP to the transfer of proteins into and across the cell membrane, serving both as a receptor for the preprotein-SecB complex and as an ATP-driven molecular motor driving the stepwise translocation of polypeptide chains across the membrane. In Paracoccus denitrificans (strain Pd 1222), this protein is Protein translocase subunit SecA.